The sequence spans 503 residues: Maturase K (503 aa).

It belongs to the intron maturase 2 family. MatK subfamily.

It is found in the plastid. It localises to the chloroplast. Its function is as follows. Usually encoded in the trnK tRNA gene intron. Probably assists in splicing its own and other chloroplast group II introns. The sequence is that of Maturase K from Stangeria eriopus (Natal grass cycad).